An 84-amino-acid chain; its full sequence is Dolichol phosphate-mannose biosynthesis regulatory protein (84 aa).

A run of 2 helical transmembrane segments spans residues 11-31 (FGLVAVSLIIFTYYTTWVILL) and 49-69 (YAVLIPLATGLLLLLFVGLFI).

The protein belongs to the DPM2 family. Component of the dolichol-phosphate mannose (DPM) synthase complex composed of DPM1, DPM2 and DPM3; in the complex interacts directly with DPM3. Component of the glycosylphosphatidylinositol-N-acetylglucosaminyltransferase (GPI-GnT) complex composed at least by PIGA, PIGC, PIGH, PIGP, PIGQ, PIGY and DPM2. Interacts with PIGA, PIGC and PIGQ.

The protein resides in the endoplasmic reticulum membrane. It functions in the pathway protein modification; protein glycosylation. Its function is as follows. Regulates the biosynthesis of dolichol phosphate-mannose. Regulatory subunit of the dolichol-phosphate mannose (DPM) synthase complex; essential for the ER localization and stable expression of DPM1. Part of the glycosylphosphatidylinositol-N-acetylglucosaminyltransferase (GPI-GnT) complex that catalyzes the transfer of N-acetylglucosamine from UDP-N-acetylglucosamine to phosphatidylinositol and participates in the first step of GPI biosynthesis. May act by regulating the GPI-GNT complex. This is Dolichol phosphate-mannose biosynthesis regulatory protein from Cricetulus griseus (Chinese hamster).